A 188-amino-acid chain; its full sequence is Protein GrpE (188 aa).

Residues 1–22 (MADEQTLDTQNLDANQAPEASG) form a disordered region.

This sequence belongs to the GrpE family. As to quaternary structure, homodimer.

Its subcellular location is the cytoplasm. Functionally, participates actively in the response to hyperosmotic and heat shock by preventing the aggregation of stress-denatured proteins, in association with DnaK and GrpE. It is the nucleotide exchange factor for DnaK and may function as a thermosensor. Unfolded proteins bind initially to DnaJ; upon interaction with the DnaJ-bound protein, DnaK hydrolyzes its bound ATP, resulting in the formation of a stable complex. GrpE releases ADP from DnaK; ATP binding to DnaK triggers the release of the substrate protein, thus completing the reaction cycle. Several rounds of ATP-dependent interactions between DnaJ, DnaK and GrpE are required for fully efficient folding. The protein is Protein GrpE of Pseudomonas fluorescens (strain ATCC BAA-477 / NRRL B-23932 / Pf-5).